The sequence spans 265 residues: Aquaporin-5 (265 aa).

Over 1 to 12 (MKKEVCSVAFFK) the chain is Cytoplasmic. The helical transmembrane segment at 13–33 (AVFAEFLATLIFVFFGLGSAL) threads the bilayer. The Extracellular segment spans residues 34-39 (KWPSAL). The helical transmembrane segment at 40–60 (PTILQISIAFGLAIGTLAQAL) threads the bilayer. The Cytoplasmic portion of the chain corresponds to 61–65 (GPVSG). Positions 66 to 74 (GHINPAITL) form an intramembrane region, discontinuously helical. The short motif at 69-71 (NPA) is the NPA 1 element. At 75 to 87 (ALLIGNQISLLRA) the chain is on the cytoplasmic side. The chain crosses the membrane as a helical span at residues 88–108 (IFYVAAQLVGAIAGAGILYWL). The Extracellular segment spans residues 109-126 (APGNARGNLAVNALSNNT). Asn-124 carries an N-linked (GlcNAc...) asparagine glycan. Residues 127 to 147 (TPGKAVVVELILTFQLALCIF) form a helical membrane-spanning segment. Topologically, residues 148 to 158 (SSTDSRRTSPV) are cytoplasmic. A helical transmembrane segment spans residues 159-179 (GSPALSIGLSVTLGHLVGIYF). Residue Thr-180 is a topological domain, extracellular. An intramembrane region (discontinuously helical) is located at residues 181 to 191 (GCSMNPARSFG). Residues 185–187 (NPA) carry the NPA 2 motif. Over 192–203 (PAVVMNRFSPSH) the chain is Extracellular. A helical transmembrane segment spans residues 204-224 (WVFWVGPIVGAVLAAILYFYL). Topologically, residues 225 to 265 (LFPSSLSLHDRVAVVKGTYEPEEDWEDHREERKKTIELTAH) are cytoplasmic.

It belongs to the MIP/aquaporin (TC 1.A.8) family. Homotetramer; each monomer provides an independent water pore. Interacts with TRPV4; the interaction is probably indirect and regulates TRPV4 activation by hypotonicity. Detected at the luminal membrane of secretory epithelial cells in hindpaw sweat glands. Detected in acinar cells in salivary glands, in duct cells in lacrimal glands and in lung (at protein level). Detected in lung, parotid, submandibular, sublingual, and lacrimal gland tissues.

It is found in the apical cell membrane. It localises to the cell membrane. The protein resides in the cytoplasmic vesicle membrane. It carries out the reaction H2O(in) = H2O(out). Functionally, aquaporins form homotetrameric transmembrane channels, with each monomer independently mediating water transport across the plasma membrane along its osmotic gradient. Plays an important role in fluid secretion in salivary glands. Required for TRPV4 activation by hypotonicity. Together with TRPV4, controls regulatory volume decrease in salivary epithelial cells. Seems to play a redundant role in water transport in the eye, lung and in sweat glands. This is Aquaporin-5 from Mus musculus (Mouse).